The following is a 269-amino-acid chain: Replication protein A 32 kDa subunit (269 aa).

Positions 1–22 are enriched in polar residues; it reads MSNRVQGGFDNNSGNNQSAQKQ. Residues 1–25 are disordered; it reads MSNRVQGGFDNNSGNNQSAQKQQAE. Residues 69-149 constitute a DNA-binding region (OB); the sequence is ITAKFEFLQS…AQIQLLYFSI (81 aa).

Belongs to the replication factor A protein 2 family. As to quaternary structure, component of the replication protein A complex (RPA), a heterotrimeric complex composed of RPA1, RPA2/TEB2 and RPA3/TEB3. Component of the telomerase holoenzyme complex, composed of the catalytic core (the catalytic subunit TERT, the telomerase RNA template component TER and TAP65/p65), which is associated with two heterotrimeric subcomplexes: (i) the replication protein A (RPA)-related subcomplex, composed of TEB1, RPA2/TEB2 and RPA3/TEB3 and (ii) the CST-like subcomplex, composed of TAP75/p75, TAP45/p45 and TAP19/p19. TEB1 and the CST-like subcomplex are tethered to the catalytic core by TAP50/p50.

It localises to the nucleus. It is found in the chromosome. The protein resides in the telomere. Its function is as follows. Component of the heterotrimeric replication protein A (RPA) and holoenzyme telomerase ribonucleoprotein complexes. As part of the RPA complex, binds and stabilizes single-stranded DNA (ssDNA) intermediates, that form during DNA replication or upon DNA stress. It prevents their reannealing and in parallel, recruits and activates different proteins and complexes involved in DNA metabolism. Thereby, it plays an essential role both in DNA replication and the cellular response to DNA damage. In the cellular response to DNA damage, the RPA complex controls DNA repair and DNA damage checkpoint activation. Also part of a subcomplex of the holoenzyme telomerase ribonucleoprotein complex: this subcomplex that contains TEB1, RPA2/TEB2, RPA3/TEB3, but not RPA1, mediates the recruitment of telomerase to telomeric DNA via specific interaction between TEB1 and telomeric ssDNA. In the holoenzyme telomerase ribonucleoprotein complex, RPA2/TEB2 and RPA3/TEB3 act as assembly factors for TEB1 incorporation into telomerase holoenzyme. In the holoenzyme telomerase ribonucleoprotein complex, RPA2/TEB2 does not contribute to ssDNA affinity, while it contributes to ssDNA affinity in the RPA complex. This is Replication protein A 32 kDa subunit (RPA2) from Tetrahymena thermophila (strain SB210).